The primary structure comprises 290 residues: ATP synthase gamma chain (290 aa).

Belongs to the ATPase gamma chain family. F-type ATPases have 2 components, CF(1) - the catalytic core - and CF(0) - the membrane proton channel. CF(1) has five subunits: alpha(3), beta(3), gamma(1), delta(1), epsilon(1). CF(0) has three main subunits: a, b and c.

It is found in the cell membrane. Its function is as follows. Produces ATP from ADP in the presence of a proton gradient across the membrane. The gamma chain is believed to be important in regulating ATPase activity and the flow of protons through the CF(0) complex. The chain is ATP synthase gamma chain from Rubrobacter xylanophilus (strain DSM 9941 / JCM 11954 / NBRC 16129 / PRD-1).